Here is a 491-residue protein sequence, read N- to C-terminus: CRM-domain containing factor CFM9, mitochondrial (491 aa).

The transit peptide at 1-25 (MNQVFKGWSRGMSTSRGRSMRSKVE) directs the protein to the mitochondrion. Residues 1 to 34 (MNQVFKGWSRGMSTSRGRSMRSKVESRMRKESGK) form a disordered region. Over residues 22 to 34 (SKVESRMRKESGK) the composition is skewed to basic and acidic residues. In terms of domain architecture, CRM spans 90–187 (ELFTSEQVQA…RNYRQPKNLI (98 aa)). The span at 255-265 (PYVFHGDKQSE) shows a compositional bias: basic and acidic residues. Disordered regions lie at residues 255 to 287 (PYVFHGDKQSERGTSVDNREESEPGDEDSDQEE) and 328 to 491 (RSRT…WDSD). A compositionally biased stretch (acidic residues) spans 277–287 (EPGDEDSDQEE). The span at 345–359 (RRNDRDTHSQRRPND) shows a compositional bias: basic and acidic residues. Acidic residues predominate over residues 360–375 (SDDDDDDGELDSEDDE). The segment covering 392–416 (RPREDFKRRSPDPRPRPRAQVRSDD) has biased composition (basic and acidic residues). Polar residues predominate over residues 453–478 (TVSASSSKQSRFRNNSSRDGINNSKS).

As to expression, highly expressed in roots and meristemic regions of young seedlings. Expressed at low levels in stems, trichomes and stigma.

The protein localises to the mitochondrion. Functionally, involved in the splicing of group II introns in mitochondria. Required for the splicing of mitochondrial introns found in nad1, nad2, nad4, nad5, nad7, rps3 and cox2 genes. Splicing of mitochondrial introns is crucial for mitochondrial biogenesis and function, plant growth and development, and plant response to abiotic stresses. The chain is CRM-domain containing factor CFM9, mitochondrial from Arabidopsis thaliana (Mouse-ear cress).